Here is a 61-residue protein sequence, read N- to C-terminus: Small ribosomal subunit protein uS14 (61 aa).

Cysteine 24, cysteine 27, cysteine 40, and cysteine 43 together coordinate Zn(2+).

It belongs to the universal ribosomal protein uS14 family. Zinc-binding uS14 subfamily. Part of the 30S ribosomal subunit. Contacts proteins S3 and S10. It depends on Zn(2+) as a cofactor.

In terms of biological role, binds 16S rRNA, required for the assembly of 30S particles and may also be responsible for determining the conformation of the 16S rRNA at the A site. The chain is Small ribosomal subunit protein uS14 from Bifidobacterium adolescentis (strain ATCC 15703 / DSM 20083 / NCTC 11814 / E194a).